Consider the following 340-residue polypeptide: MAINVFYDKDCNIDLIKSKKVAMIGFGSQGHAHAENLRDSGVEVIVGLRKDGSSWKKAEAKGFKVLTVAEATKIADVVMILLPDENQADIYANEIKPNLKDGAYLAFGHGFNIHYKRIIPCSKTNVMMIAPKAPGHTVRSEFVKGGGIPDLIAVHQDASGDTKQVALAYASAIGGGRTGIIETTFKDETETDLFGEQAVLCGGATALVQAGFETLVEAGYEPEMAYFECLHELKLIVDLMYEGGIADMRYSISNTAEYGDYVSGPRVINDESRAAMKQILKEIQNGVFAKDFILEGQAGYPRMNAERAYTKASLLEQTGVKLRNMMPWIASKKIVNQETN.

One can recognise a KARI N-terminal Rossmann domain in the interval 3-183; that stretch reads INVFYDKDCN…GGGRTGIIET (181 aa). Residues 26 to 29, arginine 49, serine 54, and 84 to 87 each bind NADP(+); these read FGSQ and DENQ. The active site involves histidine 109. Glycine 135 contributes to the NADP(+) binding site. A KARI C-terminal knotted domain is found at 184-329; that stretch reads TFKDETETDL…VKLRNMMPWI (146 aa). Residues aspartate 192, glutamate 196, glutamate 228, and glutamate 232 each contribute to the Mg(2+) site. Position 253 (serine 253) interacts with substrate.

This sequence belongs to the ketol-acid reductoisomerase family. Mg(2+) serves as cofactor.

The enzyme catalyses (2R)-2,3-dihydroxy-3-methylbutanoate + NADP(+) = (2S)-2-acetolactate + NADPH + H(+). It carries out the reaction (2R,3R)-2,3-dihydroxy-3-methylpentanoate + NADP(+) = (S)-2-ethyl-2-hydroxy-3-oxobutanoate + NADPH + H(+). It functions in the pathway amino-acid biosynthesis; L-isoleucine biosynthesis; L-isoleucine from 2-oxobutanoate: step 2/4. Its pathway is amino-acid biosynthesis; L-valine biosynthesis; L-valine from pyruvate: step 2/4. In terms of biological role, involved in the biosynthesis of branched-chain amino acids (BCAA). Catalyzes an alkyl-migration followed by a ketol-acid reduction of (S)-2-acetolactate (S2AL) to yield (R)-2,3-dihydroxy-isovalerate. In the isomerase reaction, S2AL is rearranged via a Mg-dependent methyl migration to produce 3-hydroxy-3-methyl-2-ketobutyrate (HMKB). In the reductase reaction, this 2-ketoacid undergoes a metal-dependent reduction by NADPH to yield (R)-2,3-dihydroxy-isovalerate. In Aliarcobacter butzleri (strain RM4018) (Arcobacter butzleri), this protein is Ketol-acid reductoisomerase (NADP(+)).